A 1651-amino-acid chain; its full sequence is Roundabout homolog 1 (1651 aa).

The N-terminal stretch at 1 to 25 (MKWKHLPLLVMISLLTLSKKHLLLA) is a signal peptide. The Extracellular segment spans residues 26 to 897 (QLIPDPEDLE…QQISDVVKQP (872 aa)). Residues 31-66 (PEDLERGNDNGTPAPTSDNDDNSLGYTGSRLRQEDF) are disordered. The span at 39 to 56 (DNGTPAPTSDNDDNSLGY) shows a compositional bias: polar residues. Ig-like C2-type domains lie at 68–164 (PRIV…ASLE), 170–257 (DDFR…ADVT), 262–346 (PSFV…ATLT), 351–446 (PHFV…LEVT), and 455–541 (PVIR…AYIE). Cys89 and Cys147 are disulfide-bonded. Asn160 is a glycosylation site (N-linked (GlcNAc...) asparagine). 3 disulfides stabilise this stretch: Cys191–Cys240, Cys283–Cys330, and Cys372–Cys428. A glycan (N-linked (GlcNAc...) asparagine) is linked at Asn463. A disulfide bond links Cys476 and Cys525. Fibronectin type-III domains lie at 563–657 (APSK…TQDV), 676–773 (VVLH…TLEE), and 778–874 (PPRS…LDSH). Asn790, Asn820, and Asn827 each carry an N-linked (GlcNAc...) asparagine glycan. Residues 898 to 918 (AFIAGIGAACWIILMVFSIWL) form a helical membrane-spanning segment. At 919 to 1651 (YRHRKKRNGL…NNEELEETES (733 aa)) the chain is on the cytoplasmic side. Ser940 carries the post-translational modification Phosphoserine. Phosphothreonine is present on Thr948. The residue at position 1038 (Tyr1038) is a Phosphotyrosine. Position 1055 is a phosphoserine (Ser1055). Phosphotyrosine is present on Tyr1073. A disordered region spans residues 1086–1107 (NMNNGGGDSSEKHWKPPGQQKQ). Tyr1114 is subject to Phosphotyrosine. Disordered regions lie at residues 1137-1337 (PYNH…ADME), 1352-1397 (EQTP…DGSF), and 1420-1651 (RRQM…ETES). Low complexity predominate over residues 1147-1163 (GGSYNSSDRGSSTSGSQ). The segment covering 1186 to 1196 (LPPPPAHPPPH) has biased composition (pro residues). A Phosphothreonine modification is found at Thr1240. Positions 1255–1269 (YSHQSTATLTPSPQE) are enriched in polar residues. The span at 1281 to 1293 (DLGHMPHPPDRRR) shows a compositional bias: basic and acidic residues. The span at 1296-1307 (VSPPPPPRPISP) shows a compositional bias: pro residues. Ser1297 is modified (phosphoserine). Acidic residues predominate over residues 1322-1336 (MDTDAPEEEEDEADM). Low complexity predominate over residues 1384 to 1397 (SSGRSSVSSSDGSF). The span at 1438–1451 (PRPTSPVSTDSNMS) shows a compositional bias: polar residues. Positions 1459–1470 (RPTKKQKHQPGH) are enriched in basic residues. Residues 1480 to 1490 (LPPPPVPPPAI) are compositionally biased toward pro residues. Basic and acidic residues-rich tracts occupy residues 1516–1541 (ARAD…RQVT) and 1549–1573 (DPRE…RDLP). A compositionally biased stretch (polar residues) spans 1592–1601 (FPTSNNPRDP). Low complexity predominate over residues 1602-1614 (SSSSSMSSRGSGS). Positions 1642 to 1651 (NNEELEETES) are enriched in acidic residues.

It belongs to the immunoglobulin superfamily. ROBO family. As to quaternary structure, homodimer. Dimerization is mediated by the extracellular domain and is independent of SLIT liganding. Interacts with SLIT1. Interacts with SLIT2. Interacts with FLRT3. Interacts with MYO9B (via Rho-GAP domain). Ubiquitinated. May be deubiquitinated by USP33. In terms of tissue distribution, expressed in embryonal brain and spinal cord.

The protein localises to the cell membrane. Its subcellular location is the cell projection. The protein resides in the axon. It is found in the endoplasmic reticulum-Golgi intermediate compartment membrane. Receptor for SLIT1 and SLIT2 that mediates cellular responses to molecular guidance cues in cellular migration, including axonal navigation at the ventral midline of the neural tube and projection of axons to different regions during neuronal development. Interaction with the intracellular domain of FLRT3 mediates axon attraction towards cells expressing NTN1. In axon growth cones, the silencing of the attractive effect of NTN1 by SLIT2 may require the formation of a ROBO1-DCC complex. Plays a role in the regulation of cell migration via its interaction with MYO9B; inhibits MYO9B-mediated stimulation of RHOA GTPase activity, and thereby leads to increased levels of active, GTP-bound RHOA. May be required for lung development. In Rattus norvegicus (Rat), this protein is Roundabout homolog 1 (Robo1).